A 446-amino-acid chain; its full sequence is Enolase (446 aa).

Substrate is bound by residues His-164 and Glu-173. The active-site Proton donor is Glu-216. Mg(2+) contacts are provided by Asp-251, Glu-302, and Asp-329. Residues Glu-302 and Asp-329 each contribute to the substrate site. The active-site Proton acceptor is Lys-354. Residues 381–384 (SHRS) and Lys-405 each bind substrate.

This sequence belongs to the enolase family. As to quaternary structure, homodimer. The cofactor is Mg(2+).

The protein resides in the cytoplasm. The catalysed reaction is (2R)-2-phosphoglycerate = phosphoenolpyruvate + H2O. The protein operates within carbohydrate degradation; glycolysis; pyruvate from D-glyceraldehyde 3-phosphate: step 4/5. In Oryza sativa subsp. japonica (Rice), this protein is Enolase (ENO1).